We begin with the raw amino-acid sequence, 856 residues long: Probable alpha,alpha-trehalose-phosphate synthase [UDP-forming] 8 (856 aa).

Position 5 is a phosphoserine (Ser-5). A Phosphothreonine modification is found at Thr-32. Positions 57-541 (ERKIIVANML…AKSFMQDLER (485 aa)) are glycosyltransferase.

This sequence in the N-terminal section; belongs to the glycosyltransferase 20 family. It in the C-terminal section; belongs to the trehalose phosphatase family. Expressed in leaves, roots, stems and flowers.

The catalysed reaction is D-glucose 6-phosphate + UDP-alpha-D-glucose = alpha,alpha-trehalose 6-phosphate + UDP + H(+). The sequence is that of Probable alpha,alpha-trehalose-phosphate synthase [UDP-forming] 8 (TPS8) from Arabidopsis thaliana (Mouse-ear cress).